The primary structure comprises 273 residues: WIMGHMVNAIAQIDEFVNLGANSIETDVSFDDSANPEYTYHGVPCDCGRTCTKWEYFNEFLKGLRKATTPGDSKYHEKLVLVVFDLKTSSLYDNQASDAGKKLAKSLLQNYWNNGNNGGRAYIVLSIPNLAHYKLIAGFKETLTSEGHPELMDKVGYDFSGNDEIGDVAKTYKKAGVTGHVWQSDGITNCLLRGLDRVRKAVANRDSSNGYINKVYYWTVDKRATTRDALDAGVDGIMTNYPDVIAGVLNESAYKAKFRIASYDDNPWETFKN.

The active site involves His-5. Residues Glu-25 and Asp-27 each coordinate Mg(2+). Residue His-41 is the Nucleophile of the active site. Cystine bridges form between Cys-45-Cys-51 and Cys-47-Cys-190. Position 85 (Asp-85) interacts with Mg(2+). Asn-250 carries N-linked (GlcNAc...) asparagine glycosylation.

This sequence belongs to the arthropod phospholipase D family. Class II subfamily. The cofactor is Mg(2+). Expressed by the venom gland.

The protein localises to the secreted. It carries out the reaction an N-(acyl)-sphingosylphosphocholine = an N-(acyl)-sphingosyl-1,3-cyclic phosphate + choline. The catalysed reaction is an N-(acyl)-sphingosylphosphoethanolamine = an N-(acyl)-sphingosyl-1,3-cyclic phosphate + ethanolamine. The enzyme catalyses a 1-acyl-sn-glycero-3-phosphocholine = a 1-acyl-sn-glycero-2,3-cyclic phosphate + choline. It catalyses the reaction a 1-acyl-sn-glycero-3-phosphoethanolamine = a 1-acyl-sn-glycero-2,3-cyclic phosphate + ethanolamine. Dermonecrotic toxins cleave the phosphodiester linkage between the phosphate and headgroup of certain phospholipids (sphingolipid and lysolipid substrates), forming an alcohol (often choline) and a cyclic phosphate. This toxin acts on sphingomyelin (SM). It may also act on ceramide phosphoethanolamine (CPE), lysophosphatidylcholine (LPC) and lysophosphatidylethanolamine (LPE), but not on lysophosphatidylserine (LPS), and lysophosphatidylglycerol (LPG). It acts by transphosphatidylation, releasing exclusively cyclic phosphate products as second products. Induces dermonecrosis, hemolysis, increased vascular permeability, edema, inflammatory response, and platelet aggregation. This chain is Dermonecrotic toxin LdSicTox-alphaIB1avi, found in Loxosceles deserta (Desert recluse spider).